The sequence spans 128 residues: uncharacterized protein (128 aa).

The disordered stretch occupies residues 25–61; that stretch reads LPNRLPEGSTVGPKPDSSWEAGSQGNWGLTSSGAGQD. Positions 44-61 are enriched in polar residues; the sequence is EAGSQGNWGLTSSGAGQD.

This is an uncharacterized protein from Homo sapiens (Human).